Consider the following 379-residue polypeptide: Anhydro-N-acetylmuramic acid kinase (379 aa).

9–16 contributes to the ATP binding site; that stretch reads GTSADGVD.

Belongs to the anhydro-N-acetylmuramic acid kinase family.

The catalysed reaction is 1,6-anhydro-N-acetyl-beta-muramate + ATP + H2O = N-acetyl-D-muramate 6-phosphate + ADP + H(+). Its pathway is amino-sugar metabolism; 1,6-anhydro-N-acetylmuramate degradation. The protein operates within cell wall biogenesis; peptidoglycan recycling. In terms of biological role, catalyzes the specific phosphorylation of 1,6-anhydro-N-acetylmuramic acid (anhMurNAc) with the simultaneous cleavage of the 1,6-anhydro ring, generating MurNAc-6-P. Is required for the utilization of anhMurNAc either imported from the medium or derived from its own cell wall murein, and thus plays a role in cell wall recycling. The polypeptide is Anhydro-N-acetylmuramic acid kinase (Prochlorococcus marinus (strain MIT 9303)).